A 305-amino-acid polypeptide reads, in one-letter code: Type II restriction enzyme SsoII (305 aa).

The catalysed reaction is Endonucleolytic cleavage of DNA to give specific double-stranded fragments with terminal 5'-phosphates.. Functionally, a P subtype restriction enzyme that recognizes the double-stranded sequence 5'-CCNGG-3' and cleaves before C-1. This is Type II restriction enzyme SsoII (ssoIIR) from Shigella sonnei.